The sequence spans 617 residues: Kelch-like protein 9 (617 aa).

Residues 50–119 (CDVTLVPGDG…IYTAKLSLNM (70 aa)) enclose the BTB domain. In terms of domain architecture, BACK spans 154–255 (CVEVGRIANT…TPQDLINYVQ (102 aa)). Kelch repeat units follow at residues 299 to 347 (HLVT…VIGN), 348 to 399 (FLYV…ALKG), 400 to 446 (HLYA…VYGG), 448 to 493 (MYIS…TVGD), 495 to 545 (LYVI…VFEN), and 546 to 594 (KIYV…TLTV). Residues 595–617 (FPPEENPGSPSRESPLSAPSDHS) form a disordered region.

Component of the BCR(KLHL9-KLHL13) E3 ubiquitin ligase complex, at least composed of CUL3, KLHL9, KLHL13 and RBX1. Interacts with AURKB.

Its pathway is protein modification; protein ubiquitination. Substrate-specific adapter of a BCR (BTB-CUL3-RBX1) E3 ubiquitin-protein ligase complex required for mitotic progression and cytokinesis. The BCR(KLHL9-KLHL13) E3 ubiquitin ligase complex mediates the ubiquitination of AURKB and controls the dynamic behavior of AURKB on mitotic chromosomes and thereby coordinates faithful mitotic progression and completion of cytokinesis. The sequence is that of Kelch-like protein 9 (Klhl9) from Mus musculus (Mouse).